Consider the following 469-residue polypeptide: 3-isopropylmalate dehydratase large subunit (469 aa).

[4Fe-4S] cluster is bound by residues Cys349, Cys410, and Cys413.

This sequence belongs to the aconitase/IPM isomerase family. LeuC type 1 subfamily. As to quaternary structure, heterodimer of LeuC and LeuD. [4Fe-4S] cluster serves as cofactor.

The catalysed reaction is (2R,3S)-3-isopropylmalate = (2S)-2-isopropylmalate. It functions in the pathway amino-acid biosynthesis; L-leucine biosynthesis; L-leucine from 3-methyl-2-oxobutanoate: step 2/4. Functionally, catalyzes the isomerization between 2-isopropylmalate and 3-isopropylmalate, via the formation of 2-isopropylmaleate. This is 3-isopropylmalate dehydratase large subunit from Neisseria meningitidis serogroup B (strain ATCC BAA-335 / MC58).